A 200-amino-acid chain; its full sequence is Transcriptional repressor NrdR (200 aa).

A zinc finger spans residues 3–34 (CPFCQNPDTKVIDTRISDDGHSIRRRRECPNC). An ATP-cone domain is found at 46–136 (LLVKKRSGNV…VYQNFEDLED (91 aa)).

This sequence belongs to the NrdR family. The cofactor is Zn(2+).

Its function is as follows. Negatively regulates transcription of bacterial ribonucleotide reductase nrd genes and operons by binding to NrdR-boxes. The chain is Transcriptional repressor NrdR from Bifidobacterium animalis subsp. lactis (strain AD011).